The sequence spans 237 residues: Undecaprenyl-diphosphatase (237 aa).

7 consecutive transmembrane segments (helical) span residues 38-58 (QTAVLHLGTLVSVVLFAFDGI), 65-85 (WRIILNLIVSTIPAGVFGVLF), 92-112 (LFSSPRFLPLFFSVTALILMF), 126-146 (MSFLDALLVGIAQLFALFPGI), 166-186 (ALQYSFLMSIPVVLGAGILGL), 191-211 (ITILAPIFAFLSGLFALYVLS), and 217-237 (GKIWQFSYYCLFVAILSYLVG).

This sequence belongs to the UppP family.

It localises to the cell inner membrane. It catalyses the reaction di-trans,octa-cis-undecaprenyl diphosphate + H2O = di-trans,octa-cis-undecaprenyl phosphate + phosphate + H(+). Catalyzes the dephosphorylation of undecaprenyl diphosphate (UPP). Confers resistance to bacitracin. This Thermotoga petrophila (strain ATCC BAA-488 / DSM 13995 / JCM 10881 / RKU-1) protein is Undecaprenyl-diphosphatase.